The chain runs to 455 residues: Probable glycine dehydrogenase (decarboxylating) subunit 1 (455 aa).

Belongs to the GcvP family. N-terminal subunit subfamily. The glycine cleavage system is composed of four proteins: P, T, L and H. In this organism, the P 'protein' is a heterodimer of two subunits.

It catalyses the reaction N(6)-[(R)-lipoyl]-L-lysyl-[glycine-cleavage complex H protein] + glycine + H(+) = N(6)-[(R)-S(8)-aminomethyldihydrolipoyl]-L-lysyl-[glycine-cleavage complex H protein] + CO2. In terms of biological role, the glycine cleavage system catalyzes the degradation of glycine. The P protein binds the alpha-amino group of glycine through its pyridoxal phosphate cofactor; CO(2) is released and the remaining methylamine moiety is then transferred to the lipoamide cofactor of the H protein. This is Probable glycine dehydrogenase (decarboxylating) subunit 1 from Saccharolobus islandicus (strain Y.G.57.14 / Yellowstone #1) (Sulfolobus islandicus).